The chain runs to 1075 residues: Flocculation protein FLO5 (1075 aa).

Residues 1–24 (MTIAHHCIFLVILAFLALINVASG) form the signal peptide. The PA14 domain maps to 74-249 (GGQTDISIDY…GTTVSDNFEG (176 aa)). Asparagine 135, asparagine 187, asparagine 203, and asparagine 262 each carry an N-linked (GlcNAc...) asparagine glycan. A sugar recognition region spans residues 197 to 240 (DGSLPDNITGTVYMYAGYYYPLKVVYSNAVSWGTLPISVELPDG). Tandem repeats lie at residues 278–322 (TTTE…STIT), 323–367 (TTTE…GLIT), 368–412 (TTTE…GLIT), 413–457 (TTTE…GLIT), 458–502 (TTTE…GLIS), 503–547 (TTTE…GLIT), 548–592 (TTTE…GLIT), and 593–637 (RTTE…ISSS). The segment at 278 to 637 (TTTEPWTGTF…RTPTTAISSS (360 aa)) is 8 X 45 AA approximate tandem repeats, Thr-rich. Composition is skewed to low complexity over residues 322 to 345 (TTTT…VTGT), 367 to 390 (TTTT…VTGT), 457 to 480 (TTTT…VTGT), and 547 to 570 (TTTT…VTGT). Disordered regions lie at residues 322–349 (TTTT…NGQP), 366–394 (ITTT…NGQP), 456–484 (ITTT…NGQP), and 546–574 (ITTT…NGQP). Asparagine 663 carries an N-linked (GlcNAc...) asparagine glycan. Repeat copies occupy residues 667–686 (VISS…TSSS) and 687–706 (FISS…IFSE). The tract at residues 667-706 (VISSSVISSSVTSSLVTSSSFISSSVISSSTTTSTSIFSE) is 2 X 20 AA approximate tandem repeats, Ser-rich. The segment covering 702-762 (SIFSESSTSS…SLPPVTSATT (61 aa)) has biased composition (low complexity). The disordered stretch occupies residues 702-781 (SIFSESSTSS…PATTTKTSEQ (80 aa)). N-linked (GlcNAc...) asparagine glycosylation occurs at asparagine 749. The segment covering 763–781 (GQETASSLPPATTTKTSEQ) has biased composition (polar residues). Repeat copies occupy residues 775-825 (TTKT…CPIS), 847-897 (TTET…CPIS), and 898-948 (TTES…RPQT). The segment at 775-948 (TTKTSEQTTL…TVYPTWRPQT (174 aa)) is 3 X 51 AA approximate repeats, Ser/Thr-rich. Positions 948 to 958 (TTNEQSVSSKM) are enriched in polar residues. 2 disordered regions span residues 948-980 (TTNE…AVTS) and 1016-1038 (SLTS…SSMV). 2 stretches are compositionally biased toward low complexity: residues 959-977 (NSAT…TKTA) and 1016-1026 (SLTSSGLSTMS). Positions 1027-1038 (QQPRSTPASSMV) are enriched in polar residues. Glycine 1052 carries GPI-anchor amidated glycine lipidation. Positions 1053 to 1075 (SANSLLAGSGLSVFIASLLLAII) are cleaved as a propeptide — removed in mature form.

Belongs to the flocculin family. In terms of processing, extensively O-glycosylated. Post-translationally, the GPI-anchor is attached to the protein in the endoplasmic reticulum and serves to target the protein to the cell surface. There, the glucosamine-inositol phospholipid moiety is cleaved off and the GPI-modified mannoprotein is covalently attached via its lipidless GPI glycan remnant to the 1,6-beta-glucan of the outer cell wall layer.

The protein resides in the secreted. The protein localises to the cell wall. It localises to the membrane. In terms of biological role, cell wall protein that participates directly in adhesive cell-cell interactions during yeast flocculation, a reversible, asexual and Ca(2+)-dependent process in which cells adhere to form aggregates (flocs) consisting of thousands of cells. The lectin-like protein sticks out of the cell wall of flocculent cells and selectively binds mannose residues in the cell walls of adjacent cells. Activity is inhibited by mannose, but not by glucose, maltose, sucrose or galactose. The polypeptide is Flocculation protein FLO5 (FLO5) (Saccharomyces cerevisiae (strain ATCC 204508 / S288c) (Baker's yeast)).